Consider the following 332-residue polypeptide: tRNA (cytosine(38)-C(5))-methyltransferase (332 aa).

In terms of domain architecture, SAM-dependent MTase C5-type spans 3-332 (HKILELYSGI…ISELLKILFE (330 aa)). S-adenosyl-L-homocysteine-binding positions include 12-14 (IGG), 33-34 (DI), 55-56 (NI), and Ser75. Residue Cys78 is part of the active site. Residues Gln79, Ser97, and 316-317 (NS) each bind S-adenosyl-L-homocysteine.

Belongs to the class I-like SAM-binding methyltransferase superfamily. C5-methyltransferase family.

Its subcellular location is the cytoplasm. It is found in the nucleus. The enzyme catalyses cytidine(38) in tRNA + S-adenosyl-L-methionine = 5-methylcytidine(38) in tRNA + S-adenosyl-L-homocysteine + H(+). It catalyses the reaction a 2'-deoxycytidine in DNA + S-adenosyl-L-methionine = a 5-methyl-2'-deoxycytidine in DNA + S-adenosyl-L-homocysteine + H(+). Functionally, specifically methylates cytosine 38 in the anticodon loop of tRNA(Asp). Also has DNA (cytosine-5)-methyltransferase activity. Shows affinity for both tRNA(Asp) and DNA substrates. This chain is tRNA (cytosine(38)-C(5))-methyltransferase, found in Spodoptera frugiperda (Fall armyworm).